The chain runs to 205 residues: Holliday junction branch migration complex subunit RuvA (205 aa).

The tract at residues M1–G63 is domain I. The tract at residues T64–T142 is domain II. The segment at A143–T145 is flexible linker. Residues P146 to R205 form a domain III region.

The protein belongs to the RuvA family. In terms of assembly, homotetramer. Forms an RuvA(8)-RuvB(12)-Holliday junction (HJ) complex. HJ DNA is sandwiched between 2 RuvA tetramers; dsDNA enters through RuvA and exits via RuvB. An RuvB hexamer assembles on each DNA strand where it exits the tetramer. Each RuvB hexamer is contacted by two RuvA subunits (via domain III) on 2 adjacent RuvB subunits; this complex drives branch migration. In the full resolvosome a probable DNA-RuvA(4)-RuvB(12)-RuvC(2) complex forms which resolves the HJ.

Its subcellular location is the cytoplasm. The RuvA-RuvB-RuvC complex processes Holliday junction (HJ) DNA during genetic recombination and DNA repair, while the RuvA-RuvB complex plays an important role in the rescue of blocked DNA replication forks via replication fork reversal (RFR). RuvA specifically binds to HJ cruciform DNA, conferring on it an open structure. The RuvB hexamer acts as an ATP-dependent pump, pulling dsDNA into and through the RuvAB complex. HJ branch migration allows RuvC to scan DNA until it finds its consensus sequence, where it cleaves and resolves the cruciform DNA. This is Holliday junction branch migration complex subunit RuvA from Bifidobacterium adolescentis (strain ATCC 15703 / DSM 20083 / NCTC 11814 / E194a).